A 257-amino-acid polypeptide reads, in one-letter code: Glutamate racemase (257 aa).

Substrate is bound by residues 12–13 (DS) and 44–45 (YG). The active-site Proton donor/acceptor is the Cys-75. 76-77 (NT) contacts substrate. Catalysis depends on Cys-185, which acts as the Proton donor/acceptor. Substrate is bound at residue 186 to 187 (TH).

Belongs to the aspartate/glutamate racemases family.

It catalyses the reaction L-glutamate = D-glutamate. The protein operates within cell wall biogenesis; peptidoglycan biosynthesis. Functionally, provides the (R)-glutamate required for cell wall biosynthesis. This is Glutamate racemase from Clostridium botulinum (strain Okra / Type B1).